Consider the following 174-residue polypeptide: Shikimate kinase 2 (174 aa).

Residue G12–T17 coordinates ATP. Mg(2+) contacts are provided by T16 and D32. Positions 34, 58, and 79 each coordinate substrate. The interval A112–K126 is LID domain. Position 120 (R120) interacts with ATP. A substrate-binding site is contributed by R139. Position 155 (Q155) interacts with ATP.

This sequence belongs to the shikimate kinase family. AroL subfamily. Monomer. Mg(2+) serves as cofactor.

It localises to the cytoplasm. The catalysed reaction is shikimate + ATP = 3-phosphoshikimate + ADP + H(+). It functions in the pathway metabolic intermediate biosynthesis; chorismate biosynthesis; chorismate from D-erythrose 4-phosphate and phosphoenolpyruvate: step 5/7. Functionally, catalyzes the specific phosphorylation of the 3-hydroxyl group of shikimic acid using ATP as a cosubstrate. This Yersinia pestis bv. Antiqua (strain Antiqua) protein is Shikimate kinase 2.